We begin with the raw amino-acid sequence, 84 residues long: U21-theraphotoxin-Cg1c (84 aa).

An N-terminal signal peptide occupies residues 1 to 21 (MKVSVLITLAVLGVMFLLTSA). Residues 22–47 (EERGSDQMDSPAWLKSMERIFQSEER) constitute a propeptide that is removed on maturation. 3 disulfides stabilise this stretch: Cys49/Cys63, Cys56/Cys68, and Cys62/Cys76.

It belongs to the neurotoxin 10 (Hwtx-1) family. 05 (F4a) subfamily. As to expression, expressed by the venom gland.

It is found in the secreted. In terms of biological role, probable ion channel inhibitor. This chain is U21-theraphotoxin-Cg1c, found in Chilobrachys guangxiensis (Chinese earth tiger tarantula).